Consider the following 125-residue polypeptide: MQMDPGPQVPLYWLGFVYAALAALGGISGYAKVGSVQSPSAGFFFSELAGLDASQPSRNPKEHLSSPVYIWDLARYYANKILTLWNIYACGFSCRCLLIVSKLGSMYGEQILSVVAMSQLGLMKN.

The next 2 membrane-spanning stretches (helical) occupy residues 9–29 (VPLYWLGFVYAALAALGGISG) and 81–101 (ILTLWNIYACGFSCRCLLIVS).

The protein belongs to the TMEM14 family.

The protein resides in the membrane. In Homo sapiens (Human), this protein is Transmembrane protein 14EP (TMEM14EP).